A 699-amino-acid chain; its full sequence is Elongation factor G (699 aa).

The tr-type G domain occupies 8–283 (EHIRNIGICA…AVVDFLPSPI (276 aa)). Residues 17-24 (AHIDAGKT), 81-85 (DTPGH), and 135-138 (NKMD) contribute to the GTP site.

The protein belongs to the TRAFAC class translation factor GTPase superfamily. Classic translation factor GTPase family. EF-G/EF-2 subfamily.

It localises to the cytoplasm. In terms of biological role, catalyzes the GTP-dependent ribosomal translocation step during translation elongation. During this step, the ribosome changes from the pre-translocational (PRE) to the post-translocational (POST) state as the newly formed A-site-bound peptidyl-tRNA and P-site-bound deacylated tRNA move to the P and E sites, respectively. Catalyzes the coordinated movement of the two tRNA molecules, the mRNA and conformational changes in the ribosome. The polypeptide is Elongation factor G (Rickettsia helvetica).